Consider the following 344-residue polypeptide: Uroporphyrinogen decarboxylase (344 aa).

Substrate is bound by residues 27-31 (RQAGR), F46, D76, Y151, S206, and H319.

It belongs to the uroporphyrinogen decarboxylase family. Homodimer.

It localises to the cytoplasm. It catalyses the reaction uroporphyrinogen III + 4 H(+) = coproporphyrinogen III + 4 CO2. Its pathway is porphyrin-containing compound metabolism; protoporphyrin-IX biosynthesis; coproporphyrinogen-III from 5-aminolevulinate: step 4/4. Its function is as follows. Catalyzes the decarboxylation of four acetate groups of uroporphyrinogen-III to yield coproporphyrinogen-III. This Halalkalibacterium halodurans (strain ATCC BAA-125 / DSM 18197 / FERM 7344 / JCM 9153 / C-125) (Bacillus halodurans) protein is Uroporphyrinogen decarboxylase.